The following is a 92-amino-acid chain: Protein 10 (92 aa).

One can recognise an EF-hand domain in the interval F18–H29.

Belongs to the calbindin family. As to expression, brain.

The chain is Protein 10 from Cavia porcellus (Guinea pig).